The primary structure comprises 751 residues: Photosystem I P700 chlorophyll a apoprotein A1 (751 aa).

8 consecutive transmembrane segments (helical) span residues 72-95 (IFSA…FHGA), 158-181 (LYCT…FHYH), 197-221 (MNHH…HVSL), 293-311 (TAHH…GHMY), 348-371 (WHAQ…HHMY), 387-413 (LSLF…IFMV), 435-457 (AIIS…LYVH), and 532-550 (FLVH…LILL). [4Fe-4S] cluster-binding residues include C574 and C583. 2 helical membrane-spanning segments follow: residues 590 to 611 (HVFL…HFSW) and 665 to 687 (LSAY…MFLF). H676 serves as a coordination point for chlorophyll a'. The chlorophyll a site is built by M684 and Y692. A phylloquinone-binding site is contributed by W693. Residues 725–745 (AVGVTHYLLGGIVTTWAFFLA) form a helical membrane-spanning segment.

It belongs to the PsaA/PsaB family. As to quaternary structure, the PsaA/B heterodimer binds the P700 chlorophyll special pair and subsequent electron acceptors. PSI consists of a core antenna complex that captures photons, and an electron transfer chain that converts photonic excitation into a charge separation. The cyanobacterial PSI reaction center is composed of one copy each of PsaA,B,C,D,E,F,I,J,K,L,M and X, and forms trimeric complexes. Requires PSI electron transfer chain: 5 chlorophyll a, 1 chlorophyll a', 2 phylloquinones and 3 4Fe-4S clusters. PSI core antenna: 90 chlorophyll a, 22 carotenoids, 3 phospholipids and 1 galactolipid. P700 is a chlorophyll a/chlorophyll a' dimer, A0 is one or more chlorophyll a, A1 is one or both phylloquinones and FX is a shared 4Fe-4S iron-sulfur center. as cofactor.

The protein localises to the cellular thylakoid membrane. The enzyme catalyses reduced [plastocyanin] + hnu + oxidized [2Fe-2S]-[ferredoxin] = oxidized [plastocyanin] + reduced [2Fe-2S]-[ferredoxin]. Its function is as follows. PsaA and PsaB bind P700, the primary electron donor of photosystem I (PSI), as well as the electron acceptors A0, A1 and FX. PSI is a plastocyanin/cytochrome c6-ferredoxin oxidoreductase, converting photonic excitation into a charge separation, which transfers an electron from the donor P700 chlorophyll pair to the spectroscopically characterized acceptors A0, A1, FX, FA and FB in turn. Oxidized P700 is reduced on the lumenal side of the thylakoid membrane by plastocyanin or cytochrome c6. This Gloeothece citriformis (strain PCC 7424) (Cyanothece sp. (strain PCC 7424)) protein is Photosystem I P700 chlorophyll a apoprotein A1.